The chain runs to 188 residues: Large ribosomal subunit protein eL18 (188 aa).

A Glycyl lysine isopeptide (Lys-Gly) (interchain with G-Cter in SUMO2) cross-link involves residue Lys119. Ser130 is subject to Phosphoserine. Residues 151–188 (HFGKAPGTPHSHTKPYVRSKGRKFERARGRRASRGYKN) are disordered. A Phosphothreonine modification is found at Thr158. Composition is skewed to basic residues over residues 161–171 (SHTKPYVRSKG) and 178–188 (RGRRASRGYKN). A Glycyl lysine isopeptide (Lys-Gly) (interchain with G-Cter in SUMO2) cross-link involves residue Lys164.

This sequence belongs to the eukaryotic ribosomal protein eL18 family. As to quaternary structure, component of the large ribosomal subunit.

Its subcellular location is the cytoplasm. The protein localises to the cytosol. The protein resides in the rough endoplasmic reticulum. Component of the large ribosomal subunit. The ribosome is a large ribonucleoprotein complex responsible for the synthesis of proteins in the cell. The polypeptide is Large ribosomal subunit protein eL18 (RPL18) (Canis lupus familiaris (Dog)).